Reading from the N-terminus, the 694-residue chain is Transcription activator of gluconeogenesis PTRG_06536 (694 aa).

The interval 1 to 57 (MTTPDAEDASPSPEYRSDQDDDMAAEQTTDRQSGDASPTQKPANGKPNAKDPLRPRR) is disordered. The segment at residues 64 to 92 (CFACQRAHLTCGDERPCGRCIKRGLQDHC) is a DNA-binding region (zn(2)-C6 fungal-type). Disordered stretches follow at residues 175-216 (FSNQ…FGPL), 289-369 (AMAF…GDNP), 384-420 (AQRS…RDTK), and 539-569 (VNLG…SEGA). Polar residues predominate over residues 193–204 (SVQNAGAPSTMS). A compositionally biased stretch (low complexity) spans 205–214 (QGQQGMQQFG). Over residues 302 to 324 (WQETQSRQGSMHVHTPNNTSGSG) the composition is skewed to polar residues. Low complexity predominate over residues 349–363 (ATHSTASPASTDAST). The span at 392–408 (RPQQENRPPTTALQSIH) shows a compositional bias: polar residues. A PAS domain is found at 485–559 (LQRHLMTLQE…SDTSTQNTTP (75 aa)).

It belongs to the ERT1/acuK family.

Its subcellular location is the nucleus. Its function is as follows. Transcription factor which regulates nonfermentable carbon utilization. Activator of gluconeogenetic genes. This is Transcription activator of gluconeogenesis PTRG_06536 from Pyrenophora tritici-repentis (strain Pt-1C-BFP) (Wheat tan spot fungus).